Consider the following 363-residue polypeptide: Phosphoribosylformylglycinamidine cyclo-ligase (363 aa).

Belongs to the AIR synthase family.

It is found in the cytoplasm. The catalysed reaction is 2-formamido-N(1)-(5-O-phospho-beta-D-ribosyl)acetamidine + ATP = 5-amino-1-(5-phospho-beta-D-ribosyl)imidazole + ADP + phosphate + H(+). It functions in the pathway purine metabolism; IMP biosynthesis via de novo pathway; 5-amino-1-(5-phospho-D-ribosyl)imidazole from N(2)-formyl-N(1)-(5-phospho-D-ribosyl)glycinamide: step 2/2. In Bartonella tribocorum (strain CIP 105476 / IBS 506), this protein is Phosphoribosylformylglycinamidine cyclo-ligase.